Here is a 210-residue protein sequence, read N- to C-terminus: Probable transcriptional regulator ycf29 (210 aa).

Residues Asn3–Leu119 enclose the Response regulatory domain. Asp52 carries the post-translational modification 4-aspartylphosphate. One can recognise an HTH luxR-type domain in the interval Ser142–Asn207.

It is found in the plastid. It localises to the cyanelle. This is Probable transcriptional regulator ycf29 (ycf29) from Cyanophora paradoxa.